The chain runs to 215 residues: uncharacterized protein (215 aa).

Disordered regions lie at residues 1 to 144 (MPKG…PYLR) and 156 to 215 (IQGH…GAPA). Low complexity-rich tracts occupy residues 16-29 (ASTP…ASPT), 49-58 (SSSWPKSPIK), 85-96 (SGSSSPGPSSSR), and 104-127 (STAA…RAAP).

This is an uncharacterized protein from Homo sapiens (Human).